The following is a 138-amino-acid chain: ATP synthase epsilon chain (138 aa).

The protein belongs to the ATPase epsilon chain family. F-type ATPases have 2 components, CF(1) - the catalytic core - and CF(0) - the membrane proton channel. CF(1) has five subunits: alpha(3), beta(3), gamma(1), delta(1), epsilon(1). CF(0) has three main subunits: a, b and c.

The protein resides in the cell inner membrane. Functionally, produces ATP from ADP in the presence of a proton gradient across the membrane. This Bartonella quintana (strain Toulouse) (Rochalimaea quintana) protein is ATP synthase epsilon chain.